The chain runs to 410 residues: Probable protein S-acyltransferase 6 (410 aa).

The next 2 membrane-spanning stretches (helical) occupy residues 45-65 (LGLTISLIVAPVTIFCIFVAS) and 76-96 (GVSIILVAVVFTIYDLILLML). The interval 108 to 129 (NSHPPEPEVVDGNTGSGTSQTP) is disordered. The DHHC domain maps to 147–197 (KYCDTCMLYRPPRCSHCSICNNCVERFDHHCPWVGQCIAQRNYRFFFMFVF). The active-site S-palmitoyl cysteine intermediate is Cys-177. The next 2 helical transmembrane spans lie at 191–211 (FFFMFVFSTTLLCVYVFAFCC) and 235–255 (SIALILYTFISTFFVGGLTCF). Phosphoserine is present on Ser-325.

It belongs to the DHHC palmitoyltransferase family.

The protein localises to the cell membrane. It catalyses the reaction L-cysteinyl-[protein] + hexadecanoyl-CoA = S-hexadecanoyl-L-cysteinyl-[protein] + CoA. Functionally, palmitoyl acyltransferase. The polypeptide is Probable protein S-acyltransferase 6 (PAT06) (Arabidopsis thaliana (Mouse-ear cress)).